Here is a 365-residue protein sequence, read N- to C-terminus: Probable flavin mononucleotide-dependent alkene reductase (365 aa).

FMN is bound by residues 30–32 (PLT), Ala-63, and Gln-105. Catalysis depends on Tyr-191, which acts as the Proton donor. Residues Arg-238, Ser-303, and 324-325 (GT) each bind FMN.

It belongs to the NADH:flavin oxidoreductase/NADH oxidase family. In terms of assembly, monomer. It depends on FMN as a cofactor.

Its subcellular location is the cytoplasm. It is found in the cytosol. Functionally, may function as a flavin mononucleotide (FMN)-dependent alkene reductase on substrates carrying alpha,beta-unsaturated carbonyl groups (ketones, aldehydes, carboxylic acids, esters, lactones or cyclic imides). The catalysis depends on NAD(P)H, which acts as a hydride donor for the reduction. Seems to be involved in metabolic pathways required for efficient replication of amastigotes within macrophages. Acts as a FMN-dependent nitroreductase that activates anti-leishmanial bicyclic nitroaromatic prodrugs including delamanid, DNDI-VL-2098 and (R)-PA-824, forming toxic products that kill the parasites. This Leishmania infantum protein is Probable flavin mononucleotide-dependent alkene reductase.